The primary structure comprises 20 residues: Phosphoglycerate kinase (20 aa).

Residues 1 to 20 are disordered; the sequence is MNKKSIRNVNLKGKRVFDRV.

This sequence belongs to the phosphoglycerate kinase family. In terms of assembly, monomer.

The protein resides in the cytoplasm. The enzyme catalyses (2R)-3-phosphoglycerate + ATP = (2R)-3-phospho-glyceroyl phosphate + ADP. It functions in the pathway carbohydrate degradation; glycolysis; pyruvate from D-glyceraldehyde 3-phosphate: step 2/5. In Bacillus cereus, this protein is Phosphoglycerate kinase.